The following is a 366-amino-acid chain: D-alanine--D-alanine ligase (366 aa).

Residues 145-348 (KRLLDDAGLA…YQSLITKLIE (204 aa)) form the ATP-grasp domain. 175–230 (VEQLGLPLFIKPANLGSSVGISKVNNEAEFNAALSMAFEYDLKVIIESAIVGREIE) provides a ligand contact to ATP. Residues Asp-302, Glu-315, and Asn-317 each contribute to the Mg(2+) site.

The protein belongs to the D-alanine--D-alanine ligase family. The cofactor is Mg(2+). Mn(2+) serves as cofactor.

It is found in the cytoplasm. The catalysed reaction is 2 D-alanine + ATP = D-alanyl-D-alanine + ADP + phosphate + H(+). The protein operates within cell wall biogenesis; peptidoglycan biosynthesis. Cell wall formation. In Proteus mirabilis (strain HI4320), this protein is D-alanine--D-alanine ligase.